The sequence spans 87 residues: Small ribosomal subunit protein bS20 (87 aa).

Residues 1–27 (MANSVQATKRARQAEKHRQHNAGMRAA) form a disordered region. Positions 9–20 (KRARQAEKHRQH) are enriched in basic residues.

It belongs to the bacterial ribosomal protein bS20 family.

In terms of biological role, binds directly to 16S ribosomal RNA. The sequence is that of Small ribosomal subunit protein bS20 from Hydrogenovibrio crunogenus (strain DSM 25203 / XCL-2) (Thiomicrospira crunogena).